The sequence spans 361 residues: GDSL esterase/lipase At2g40250 (361 aa).

An N-terminal signal peptide occupies residues 1–28; that stretch reads MNRNQHKPMFVTFLINILLLQLLNLTNA. Ser43 (nucleophile) is an active-site residue. Residues Asp337 and His340 contribute to the active site.

It belongs to the 'GDSL' lipolytic enzyme family.

Its subcellular location is the secreted. The chain is GDSL esterase/lipase At2g40250 from Arabidopsis thaliana (Mouse-ear cress).